A 148-amino-acid polypeptide reads, in one-letter code: uncharacterized protein (148 aa).

Positions 37–94 are enriched in low complexity; it reads NNNNYNNNNKNNNNNNNNNNNNNNNNNNNNNNNYINSCNSNNNNNNNNNNTKNNNINS. Positions 37–99 are disordered; the sequence is NNNNYNNNNK…NNINSRTDKN (63 aa).

This is an uncharacterized protein from Dictyostelium discoideum (Social amoeba).